The primary structure comprises 240 residues: MTGKPAYKRVLLKASGEALMGSQGFGIDVSVADRIANDIKQARALGVEVGVVIGGGNIFRGVAVASKGGDRVTGDHMGMLATVINSLALRTSLHKIGVDSVVLSAIAMPEICESFSQRQATAYMDEGKVVIFAGGTGNPFFTTDSAAALRAAEIEADALLKGTQVDGIYSADPKKDPGATRFDQLTHKEVLDRGLAVMDTAAVALARENNIPIIVYSIHENGGLADILQGKGRCTIVSDN.

13-16 (KASG) lines the ATP pocket. Residues 21–26 (GSQGFG) are involved in allosteric activation by GTP. A UMP-binding site is contributed by Gly-55. Residues Gly-56 and Arg-60 each contribute to the ATP site. UMP is bound by residues Asp-75 and 136-143 (TGNPFFTT). ATP contacts are provided by Thr-163, Gln-164, Tyr-169, and Asp-172.

The protein belongs to the UMP kinase family. Homohexamer.

It is found in the cytoplasm. The enzyme catalyses UMP + ATP = UDP + ADP. Its pathway is pyrimidine metabolism; CTP biosynthesis via de novo pathway; UDP from UMP (UMPK route): step 1/1. Allosterically activated by GTP. Inhibited by UTP. Its function is as follows. Catalyzes the reversible phosphorylation of UMP to UDP. The polypeptide is Uridylate kinase (Brucella abortus biovar 1 (strain 9-941)).